A 308-amino-acid chain; its full sequence is ABC transporter protein AbcA (308 aa).

An ABC transporter domain is found at 6 to 245 (LAVSGVNKSF…YHKLLHMEGD (240 aa)). Position 58–65 (58–65 (GHNGAGKS)) interacts with ATP.

Belongs to the ABC transporter superfamily.

Its function is as follows. Influences the expression of the surface array protein gene (vapA). May have both regulatory and transport activities. This is ABC transporter protein AbcA (abcA) from Aeromonas salmonicida.